The chain runs to 619 residues: Grainyhead-like protein 2 homolog (619 aa).

The segment at 1-90 is transcription activation; the sequence is MSQETDNKRL…KINEGHEDQD (90 aa). Disordered stretches follow at residues 86–108, 125–147, and 423–444; these read HEDQ…STGE, NDTV…PQPA, and EERK…CNNS. The segment covering 99 to 108 has biased composition (polar residues); it reads ETPSNLSTGE. A Grh/CP2 DB domain is found at 239–477; that stretch reads ASSTFQYTLE…DLDVQPVLFI (239 aa).

The protein belongs to the grh/CP2 family. Grainyhead subfamily.

The protein resides in the nucleus. It is found in the membrane. Functionally, transcription factor playing an important role in primary neurulation and in epithelial development. Binds directly to the consensus DNA sequence 5'-AACCGGTT-3' acting as an activator and repressor on distinct target genes. The protein is Grainyhead-like protein 2 homolog (grhl2) of Xenopus tropicalis (Western clawed frog).